We begin with the raw amino-acid sequence, 263 residues long: Small ribosomal subunit protein eS1 (263 aa).

The span at 236–254 (GDGKGGSDEPGARVDRPEG) shows a compositional bias: basic and acidic residues. A disordered region spans residues 236–263 (GDGKGGSDEPGARVDRPEGYEPPVQETV).

This sequence belongs to the eukaryotic ribosomal protein eS1 family. As to quaternary structure, component of the small ribosomal subunit. Mature ribosomes consist of a small (40S) and a large (60S) subunit. The 40S subunit contains about 33 different proteins and 1 molecule of RNA (18S). The 60S subunit contains about 49 different proteins and 3 molecules of RNA (28S, 5.8S and 5S).

The protein resides in the cytoplasm. This is Small ribosomal subunit protein eS1 from Periplaneta americana (American cockroach).